Reading from the N-terminus, the 657-residue chain is tRNA 5-methylaminomethyl-2-thiouridine biosynthesis bifunctional protein MnmC (657 aa).

A tRNA (mnm(5)s(2)U34)-methyltransferase region spans residues M1–Q235. The FAD-dependent cmnm(5)s(2)U34 oxidoreductase stretch occupies residues I261–T657.

This sequence in the N-terminal section; belongs to the methyltransferase superfamily. tRNA (mnm(5)s(2)U34)-methyltransferase family. It in the C-terminal section; belongs to the DAO family. Requires FAD as cofactor.

The protein localises to the cytoplasm. The enzyme catalyses 5-aminomethyl-2-thiouridine(34) in tRNA + S-adenosyl-L-methionine = 5-methylaminomethyl-2-thiouridine(34) in tRNA + S-adenosyl-L-homocysteine + H(+). Catalyzes the last two steps in the biosynthesis of 5-methylaminomethyl-2-thiouridine (mnm(5)s(2)U) at the wobble position (U34) in tRNA. Catalyzes the FAD-dependent demodification of cmnm(5)s(2)U34 to nm(5)s(2)U34, followed by the transfer of a methyl group from S-adenosyl-L-methionine to nm(5)s(2)U34, to form mnm(5)s(2)U34. In Ectopseudomonas mendocina (strain ymp) (Pseudomonas mendocina), this protein is tRNA 5-methylaminomethyl-2-thiouridine biosynthesis bifunctional protein MnmC.